The following is a 451-amino-acid chain: Phosphoglucosamine mutase (451 aa).

Serine 103 serves as the catalytic Phosphoserine intermediate. Mg(2+) is bound by residues serine 103, aspartate 243, aspartate 245, and aspartate 247. Serine 103 carries the post-translational modification Phosphoserine.

This sequence belongs to the phosphohexose mutase family. Requires Mg(2+) as cofactor. Post-translationally, activated by phosphorylation.

It carries out the reaction alpha-D-glucosamine 1-phosphate = D-glucosamine 6-phosphate. Functionally, catalyzes the conversion of glucosamine-6-phosphate to glucosamine-1-phosphate. The chain is Phosphoglucosamine mutase from Limosilactobacillus reuteri subsp. reuteri (strain JCM 1112) (Lactobacillus reuteri).